Here is a 220-residue protein sequence, read N- to C-terminus: MKLNKYIDHTLLKQDAKKKQIDSLLSEAREYDFASVCVNPTWVEHAKKGLEGTDAKVCTVVGFPLGATTSAVKAFETKEAIQNGADEIDMVINVGALKSGNLALVESDIRAVVEASGDKLVKVIIEACLLTDQEKIVVCQLAQKAGADFVKTSTGFSTGGATIADVRLMCETVGSDMGVKAAGGARSYADALAFVEAGATRIGTSAGVAILKGELADGDY.

Residue Asp-89 is the Proton donor/acceptor of the active site. Lys-151 acts as the Schiff-base intermediate with acetaldehyde in catalysis. Lys-180 acts as the Proton donor/acceptor in catalysis.

This sequence belongs to the DeoC/FbaB aldolase family. DeoC type 1 subfamily.

The protein resides in the cytoplasm. It catalyses the reaction 2-deoxy-D-ribose 5-phosphate = D-glyceraldehyde 3-phosphate + acetaldehyde. The protein operates within carbohydrate degradation; 2-deoxy-D-ribose 1-phosphate degradation; D-glyceraldehyde 3-phosphate and acetaldehyde from 2-deoxy-alpha-D-ribose 1-phosphate: step 2/2. Catalyzes a reversible aldol reaction between acetaldehyde and D-glyceraldehyde 3-phosphate to generate 2-deoxy-D-ribose 5-phosphate. This is Deoxyribose-phosphate aldolase from Streptococcus pneumoniae (strain Hungary19A-6).